The primary structure comprises 1100 residues: Serine/threonine/tyrosine-interacting-like protein 2 (1100 aa).

Polar residues predominate over residues 1-12; the sequence is MASSVEDQQLQQ. Residues 1–21 are disordered; the sequence is MASSVEDQQLQQEEAESVKDV. In terms of domain architecture, Tyrosine-protein phosphatase spans 141-289; that stretch reads SPVDEVWPNV…LRQLNETLME (149 aa). Residues 356–374 are compositionally biased toward polar residues; sequence CGSQQPNMQQPADQPSLPG. 8 disordered regions span residues 356 to 383, 411 to 436, 479 to 504, 542 to 561, 575 to 615, 667 to 686, 888 to 1060, and 1075 to 1100; these read CGSQ…EDGD, EDED…TSED, AAAR…DDVQ, KENA…APDL, KQQK…ERSR, VLSG…TPAP, CEKP…DEEI, and VAEE…HDHK. Residues 418-428 show a composition bias toward basic and acidic residues; the sequence is DKTQRAVRPDD. Positions 580 to 615 are enriched in basic and acidic residues; that stretch reads HGGEENKEEILQMSRGEDTATARRRQRREEVLERSR. Over residues 667 to 676 the composition is skewed to low complexity; it reads VLSGRSTRSL. The span at 888 to 898 shows a compositional bias: basic and acidic residues; it reads CEKPKPKRDYG. 3 stretches are compositionally biased toward polar residues: residues 907–916, 994–1013, and 1029–1041; these read ASANNPTSSI, SYSS…TSFA, and FQNH…SSVY. Positions 1089–1100 are enriched in basic and acidic residues; it reads RKQEESKSHDHK.

The protein belongs to the protein-tyrosine phosphatase family. Non-receptor class dual specificity subfamily. As to expression, expressed in muscle fibers in a regular striated pattern (at protein level).

Its subcellular location is the cytoplasm. It localises to the myofibril. It is found in the sarcomere. Functionally, required for myofiber maturation. In Danio rerio (Zebrafish), this protein is Serine/threonine/tyrosine-interacting-like protein 2 (styxl2).